A 288-amino-acid chain; its full sequence is Homoserine kinase (288 aa).

79–89 (PPARGLGSSSA) is an ATP binding site.

It belongs to the GHMP kinase family. Homoserine kinase subfamily.

It is found in the cytoplasm. The enzyme catalyses L-homoserine + ATP = O-phospho-L-homoserine + ADP + H(+). It participates in amino-acid biosynthesis; L-threonine biosynthesis; L-threonine from L-aspartate: step 4/5. Catalyzes the ATP-dependent phosphorylation of L-homoserine to L-homoserine phosphate. The polypeptide is Homoserine kinase (Listeria monocytogenes serotype 4b (strain CLIP80459)).